Reading from the N-terminus, the 178-residue chain is Large ribosomal subunit protein uL6 (178 aa).

This sequence belongs to the universal ribosomal protein uL6 family. Part of the 50S ribosomal subunit.

Its function is as follows. This protein binds to the 23S rRNA, and is important in its secondary structure. It is located near the subunit interface in the base of the L7/L12 stalk, and near the tRNA binding site of the peptidyltransferase center. In Frankia alni (strain DSM 45986 / CECT 9034 / ACN14a), this protein is Large ribosomal subunit protein uL6.